A 119-amino-acid chain; its full sequence is Protein TusC (119 aa).

This sequence belongs to the DsrF/TusC family. In terms of assembly, heterohexamer, formed by a dimer of trimers. The hexameric TusBCD complex contains 2 copies each of TusB, TusC and TusD. The TusBCD complex interacts with TusE.

Its subcellular location is the cytoplasm. Functionally, part of a sulfur-relay system required for 2-thiolation of 5-methylaminomethyl-2-thiouridine (mnm(5)s(2)U) at tRNA wobble positions. This is Protein TusC from Shigella sonnei (strain Ss046).